Here is a 110-residue protein sequence, read N- to C-terminus: U12-hexatoxin-Hi1a (110 aa).

Positions 1 to 18 (MRVALVFLVLSILAATHG) are cleaved as a signal peptide. Disulfide bonds link Cys72–Cys86, Cys79–Cys91, and Cys85–Cys104.

Expressed by the venom gland.

The protein localises to the secreted. In terms of biological role, probable ion channel inhibitor. The protein is U12-hexatoxin-Hi1a of Hadronyche infensa (Fraser island funnel-web spider).